We begin with the raw amino-acid sequence, 430 residues long: ATP-dependent RNA helicase RhlB (430 aa).

The Q motif motif lies at 9 to 37 (QKFSDFALHPQVIEALESKGFHYCTPIQA). Residues 40 to 219 (LPLTLSGRDV…FEQMNNAEYV (180 aa)) enclose the Helicase ATP-binding domain. 53–60 (AQTGTGKT) is a binding site for ATP. The DEAD box signature appears at 165–168 (DEAD). The Helicase C-terminal domain maps to 245–390 (RLLQTLLEEE…LSKYNSDALM (146 aa)). Residues 392-430 (DLPAPKRLTRPPRSNNGPRRHNSAPRRSGAPRNNRKRAD) are disordered.

Belongs to the DEAD box helicase family. RhlB subfamily. In terms of assembly, component of the RNA degradosome, which is a multiprotein complex involved in RNA processing and mRNA degradation.

It is found in the cytoplasm. It catalyses the reaction ATP + H2O = ADP + phosphate + H(+). In terms of biological role, DEAD-box RNA helicase involved in RNA degradation. Has RNA-dependent ATPase activity and unwinds double-stranded RNA. The polypeptide is ATP-dependent RNA helicase RhlB (Pectobacterium atrosepticum (strain SCRI 1043 / ATCC BAA-672) (Erwinia carotovora subsp. atroseptica)).